A 401-amino-acid polypeptide reads, in one-letter code: Tryptophan synthase beta chain (401 aa).

Lys-88 carries the post-translational modification N6-(pyridoxal phosphate)lysine.

It belongs to the TrpB family. As to quaternary structure, tetramer of two alpha and two beta chains. Pyridoxal 5'-phosphate is required as a cofactor.

The catalysed reaction is (1S,2R)-1-C-(indol-3-yl)glycerol 3-phosphate + L-serine = D-glyceraldehyde 3-phosphate + L-tryptophan + H2O. It functions in the pathway amino-acid biosynthesis; L-tryptophan biosynthesis; L-tryptophan from chorismate: step 5/5. Its function is as follows. The beta subunit is responsible for the synthesis of L-tryptophan from indole and L-serine. This chain is Tryptophan synthase beta chain, found in Shewanella denitrificans (strain OS217 / ATCC BAA-1090 / DSM 15013).